The chain runs to 682 residues: Potassium-transporting ATPase ATP-binding subunit (682 aa).

4 consecutive transmembrane segments (helical) span residues 35–55 (VMFV…AMAA), 62–82 (TGFT…ANFA), 219–239 (IALT…TVTL), and 254–274 (VLVA…LSAI). The active-site 4-aspartylphosphate intermediate is the Asp307. ATP-binding positions include Asp344, Glu348, 377 to 384 (FSAQTRMS), and Lys395. Mg(2+) is bound by residues Asp518 and Asp522. The next 3 membrane-spanning stretches (helical) occupy residues 577 to 597 (TFSI…AFAA), 616 to 636 (AILS…PLAL), and 656 to 676 (IYGV…DMLL).

Belongs to the cation transport ATPase (P-type) (TC 3.A.3) family. Type IA subfamily. The system is composed of three essential subunits: KdpA, KdpB and KdpC.

It is found in the cell inner membrane. The enzyme catalyses K(+)(out) + ATP + H2O = K(+)(in) + ADP + phosphate + H(+). Functionally, part of the high-affinity ATP-driven potassium transport (or Kdp) system, which catalyzes the hydrolysis of ATP coupled with the electrogenic transport of potassium into the cytoplasm. This subunit is responsible for energy coupling to the transport system and for the release of the potassium ions to the cytoplasm. The chain is Potassium-transporting ATPase ATP-binding subunit from Erwinia tasmaniensis (strain DSM 17950 / CFBP 7177 / CIP 109463 / NCPPB 4357 / Et1/99).